Reading from the N-terminus, the 96-residue chain is Putative pterin-4-alpha-carbinolamine dehydratase (96 aa).

It belongs to the pterin-4-alpha-carbinolamine dehydratase family.

It carries out the reaction (4aS,6R)-4a-hydroxy-L-erythro-5,6,7,8-tetrahydrobiopterin = (6R)-L-erythro-6,7-dihydrobiopterin + H2O. In Brucella anthropi (strain ATCC 49188 / DSM 6882 / CCUG 24695 / JCM 21032 / LMG 3331 / NBRC 15819 / NCTC 12168 / Alc 37) (Ochrobactrum anthropi), this protein is Putative pterin-4-alpha-carbinolamine dehydratase.